The following is a 255-amino-acid chain: 5'-nucleotidase SurE (255 aa).

The a divalent metal cation site is built by Asp8, Asp9, Ser40, and Asn93.

This sequence belongs to the SurE nucleotidase family. A divalent metal cation is required as a cofactor.

The protein resides in the cytoplasm. The enzyme catalyses a ribonucleoside 5'-phosphate + H2O = a ribonucleoside + phosphate. Its function is as follows. Nucleotidase that shows phosphatase activity on nucleoside 5'-monophosphates. In Rhodopseudomonas palustris (strain BisB18), this protein is 5'-nucleotidase SurE.